A 355-amino-acid chain; its full sequence is Peptide chain release factor 1 (355 aa).

N5-methylglutamine is present on Gln233. The segment at 280–310 (ERRKKEQKRANNRRGQVGSGDRSERIRTYNF) is disordered.

This sequence belongs to the prokaryotic/mitochondrial release factor family. Post-translationally, methylated by PrmC. Methylation increases the termination efficiency of RF1.

Its subcellular location is the cytoplasm. Functionally, peptide chain release factor 1 directs the termination of translation in response to the peptide chain termination codons UAG and UAA. The chain is Peptide chain release factor 1 from Rickettsia canadensis (strain McKiel).